We begin with the raw amino-acid sequence, 79 residues long: Acyl carrier protein (79 aa).

In terms of domain architecture, Carrier spans 4–79 (AEIKDKVYDI…QAIDYIVNKK (76 aa)). Ser39 carries the post-translational modification O-(pantetheine 4'-phosphoryl)serine.

Belongs to the acyl carrier protein (ACP) family. In terms of processing, 4'-phosphopantetheine is transferred from CoA to a specific serine of apo-ACP by AcpS. This modification is essential for activity because fatty acids are bound in thioester linkage to the sulfhydryl of the prosthetic group.

It localises to the cytoplasm. The protein operates within lipid metabolism; fatty acid biosynthesis. Its function is as follows. Carrier of the growing fatty acid chain in fatty acid biosynthesis. The protein is Acyl carrier protein of Chlorobaculum parvum (strain DSM 263 / NCIMB 8327) (Chlorobium vibrioforme subsp. thiosulfatophilum).